The sequence spans 536 residues: Berberine bridge enzyme-like 2 (536 aa).

The N-terminal stretch at 1–20 is a signal peptide; that stretch reads MKIFCLILFLISSFISTSLA. The cysteines at positions 35 and 98 are disulfide-linked. N-linked (GlcNAc...) asparagine glycosylation is found at Asn38, Asn73, Asn136, Asn266, Asn334, and Asn352. The 175-residue stretch at 76–250 folds into the FAD-binding PCMH-type domain; it reads ATPKPAIVIA…LAFKIKLVPV (175 aa). Residues 113-175 constitute a cross-link (6-(S-cysteinyl)-8alpha-(pros-histidyl)-FAD (His-Cys)); it reads HDYEGVSYIS…KSHGFPAGVC (63 aa).

Belongs to the oxygen-dependent FAD-linked oxidoreductase family. It depends on FAD as a cofactor. Post-translationally, the FAD cofactor is bound via a bicovalent 6-S-cysteinyl, 8alpha-N1-histidyl FAD linkage.

The protein localises to the secreted. The protein resides in the cell wall. The protein is Berberine bridge enzyme-like 2 of Arabidopsis thaliana (Mouse-ear cress).